Here is a 224-residue protein sequence, read N- to C-terminus: Putative adhesin RMA_1308 (224 aa).

Positions 1 to 22 (MQKLLLIAATSATILSSSLSFA) are cleaved as a signal peptide.

The sequence is that of Putative adhesin RMA_1308 from Rickettsia massiliae (strain Mtu5).